The primary structure comprises 373 residues: Methylmalonyl-CoA decarboxylase subunit beta (373 aa).

The next 10 membrane-spanning stretches (helical) occupy residues 17–37 (FLAF…LLYL), 38–58 (AFAR…CLLA), 81–101 (IFPP…PLIA), 106–126 (LLLG…AMML), 132–152 (EAAA…YLAT), 156–176 (PHLL…VPLI), 206–226 (IVFP…ITSL), 257–277 (VTIF…FLSL), 280–300 (IKII…GVLF), and 343–363 (FLLM…AVAA).

The protein belongs to the GcdB/MmdB/OadB family. In terms of assembly, the methylmalonyl-CoA decarboxylase is composed of five subunits: the carboxyltransferase alpha subunit (MmdA), the tunnel beta subunit (MmdB), the biotin-containing gamma subunit (MmdC), and the delta (MmdD) and epsilon (MmdE) subunits. In terms of processing, the N-terminus is blocked.

Its subcellular location is the cell membrane. The catalysed reaction is (S)-methylmalonyl-CoA + Na(+)(in) + H(+)(out) = propanoyl-CoA + Na(+)(out) + CO2. Completely inhibited by avidin. Its function is as follows. Tunnel subunit of the sodium ion pump methylmalonyl-CoA decarboxylase, which converts the chemical energy of a decarboxylation reaction into an electrochemical gradient of Na(+) ions across the cytoplasmic membrane, thereby creating a sodium ion motive force that is used for ATP synthesis. The beta subunit catalyzes the decarboxylation of the carboxybiotin carrier protein and the coupled export of Na(+) ions. Can also convert malonyl-CoA into acetyl-CoA. This Veillonella parvula (Staphylococcus parvulus) protein is Methylmalonyl-CoA decarboxylase subunit beta.